The following is a 798-amino-acid chain: Probable DEAD-box ATP-dependent RNA helicase 48 (798 aa).

Disordered regions lie at residues 76–100 (KMWGNPDSGEKTAKSKQSHGPMSPK), 117–148 (DFWNENDGPVKKSDQGSRSGSDSIDSTSNSPI), and 236–257 (FRKNDSSTEEDSDEEGDEGKMI). Residues 132 to 148 (GSRSGSDSIDSTSNSPI) show a composition bias toward low complexity. Residues 242-252 (STEEDSDEEGD) are compositionally biased toward acidic residues. The short motif at 328-356 (KRFDESCISPLTLKALSASGILKMTRVQD) is the Q motif element. The 185-residue stretch at 359–543 (LSECLDGKDA…QLVLKRDHSY (185 aa)) folds into the Helicase ATP-binding domain. Residue 372–379 (AKTGTGKS) participates in ATP binding. The DEAD box signature appears at 491 to 494 (DEAD). One can recognise a Helicase C-terminal domain in the interval 577 to 726 (LLKEHINNTP…SIVKHQVDQS (150 aa)).

Belongs to the DEAD box helicase family.

The enzyme catalyses ATP + H2O = ADP + phosphate + H(+). In Arabidopsis thaliana (Mouse-ear cress), this protein is Probable DEAD-box ATP-dependent RNA helicase 48 (RH48).